Here is a 239-residue protein sequence, read N- to C-terminus: Purine nucleoside phosphorylase DeoD-type (239 aa).

His-5 is a binding site for a purine D-ribonucleoside. Residues Gly-21, Arg-25, Arg-44, and 88–91 each bind phosphate; that span reads RVGS. Residues 180 to 182 and 204 to 205 each bind a purine D-ribonucleoside; these read EME and SD. Asp-205 acts as the Proton donor in catalysis.

It belongs to the PNP/UDP phosphorylase family. Homohexamer; trimer of homodimers.

It carries out the reaction a purine D-ribonucleoside + phosphate = a purine nucleobase + alpha-D-ribose 1-phosphate. It catalyses the reaction a purine 2'-deoxy-D-ribonucleoside + phosphate = a purine nucleobase + 2-deoxy-alpha-D-ribose 1-phosphate. Its function is as follows. Catalyzes the reversible phosphorolytic breakdown of the N-glycosidic bond in the beta-(deoxy)ribonucleoside molecules, with the formation of the corresponding free purine bases and pentose-1-phosphate. This Pectobacterium atrosepticum (strain SCRI 1043 / ATCC BAA-672) (Erwinia carotovora subsp. atroseptica) protein is Purine nucleoside phosphorylase DeoD-type.